Here is a 166-residue protein sequence, read N- to C-terminus: Small ribosomal subunit protein uS5 (166 aa).

The 64-residue stretch at 11–74 (LQEKLIAVNR…EKARRNMMNV (64 aa)) folds into the S5 DRBM domain.

This sequence belongs to the universal ribosomal protein uS5 family. In terms of assembly, part of the 30S ribosomal subunit. Contacts proteins S4 and S8.

Its function is as follows. With S4 and S12 plays an important role in translational accuracy. Functionally, located at the back of the 30S subunit body where it stabilizes the conformation of the head with respect to the body. In Buchnera aphidicola subsp. Acyrthosiphon kondoi (Acyrthosiphon kondoi symbiotic bacterium), this protein is Small ribosomal subunit protein uS5.